Reading from the N-terminus, the 934-residue chain is Intimin (934 aa).

The first 39 residues, 1 to 39, serve as a signal peptide directing secretion; sequence MITHGCYTRTRHKHKLKKTLIMLSAGLGLFFYVNQNSFA. The interval 40–153 is peptidoglycan-binding; the sequence is NGENYFKLGS…KLTKMSPDVT (114 aa). Residues 40-153 form a sufficient for homodimerization region; that stretch reads NGENYFKLGS…KLTKMSPDVT (114 aa). A required for periplasmic localization region spans residues 40 to 212; it reads NGENYFKLGS…LQAWLQHYGT (173 aa). Positions 63–112 constitute a LysM domain; it reads LFYTLKTGETVADLSKSQDINLSTIWSLNKHLYSSESEMMKAAPGQQIIL. The segment at 210–411 is inverse autotransporter; it reads YGTAEVNLQS…LYSMQFRYQF (202 aa). The segment at 402–411 is signature sequence for beta-barrel assembly machinery (BAM), which recognizes the unfolded beta-barrel in the periplasm; the sequence is LYSMQFRYQF. The interval 437–449 is minimum linker residues necessary for formation of a heat-modifiable beta-barrel; the sequence is LVQRNNNIILEYK. 2 consecutive Big-1 domains span residues 560-653 and 660-753; these read VTDF…VIFF and ITEI…VTFF. Residues 747 to 934 form an intimin receptor Tir-binding region; the sequence is ATEVTFFDEL…TPNVYAVCVE (188 aa). Positions 787-833 constitute a BIG2 domain; it reads ASGGDGTYSWYSENTSIATVDASGKVTLNGKGSVVIKATSGDKQTVS. An intrachain disulfide couples cysteine 858 to cysteine 932.

The protein belongs to the intimin/invasin family. As to quaternary structure, homodimer. Interacts with Tir.

It is found in the cell outer membrane. Its function is as follows. An inverse autotransporter. Adhesin, which mediates attachment to the human intestine epithelial cells. Necessary for the production of attaching and effacing lesions on infected human tissue culture cells. Anchored to the outer membrane by binding to peptidoglycan (PGN) via its periplasmic domain, thus helping in receptor interactions during host invasion. PGN-binding may also aid in resisting mechanical and chemical stress during transit of the bacterium through the gastrointestinal tract of the host. The polypeptide is Intimin (Escherichia coli O157:H7).